We begin with the raw amino-acid sequence, 156 residues long: MSRRNISKKRFPKADPTYNSYLVSLLVTRILKSGKKNLAQNIVNSAFDIIKSKTNEDPLVIFEKAIRNASPVVEVKARRIGGSTYQVPIEVSSFRATNLALRWIIQYSRQRVGRTMSIKLASEIIDTANDIGNTIKKKEETHKMADANKAFAHFRY.

It belongs to the universal ribosomal protein uS7 family. In terms of assembly, part of the 30S ribosomal subunit.

Its subcellular location is the plastid. It localises to the chloroplast. Its function is as follows. One of the primary rRNA binding proteins, it binds directly to 16S rRNA where it nucleates assembly of the head domain of the 30S subunit. In Thalassiosira pseudonana (Marine diatom), this protein is Small ribosomal subunit protein uS7c (rps7).